We begin with the raw amino-acid sequence, 129 residues long: Phosphoribosyl-AMP cyclohydrolase (129 aa).

Residue D77 coordinates Mg(2+). C78 lines the Zn(2+) pocket. Mg(2+) is bound by residues D79 and D81. Zn(2+)-binding residues include C94 and C101.

It belongs to the PRA-CH family. As to quaternary structure, homodimer. Mg(2+) is required as a cofactor. Requires Zn(2+) as cofactor.

The protein resides in the cytoplasm. It carries out the reaction 1-(5-phospho-beta-D-ribosyl)-5'-AMP + H2O = 1-(5-phospho-beta-D-ribosyl)-5-[(5-phospho-beta-D-ribosylamino)methylideneamino]imidazole-4-carboxamide. Its pathway is amino-acid biosynthesis; L-histidine biosynthesis; L-histidine from 5-phospho-alpha-D-ribose 1-diphosphate: step 3/9. Its function is as follows. Catalyzes the hydrolysis of the adenine ring of phosphoribosyl-AMP. In Pelotomaculum thermopropionicum (strain DSM 13744 / JCM 10971 / SI), this protein is Phosphoribosyl-AMP cyclohydrolase.